The primary structure comprises 182 residues: UPF0301 protein NMC1274 (182 aa).

Belongs to the UPF0301 (AlgH) family.

In Neisseria meningitidis serogroup C / serotype 2a (strain ATCC 700532 / DSM 15464 / FAM18), this protein is UPF0301 protein NMC1274.